The primary structure comprises 189 residues: Probable nicotinate-nucleotide adenylyltransferase (189 aa).

It belongs to the NadD family.

It catalyses the reaction nicotinate beta-D-ribonucleotide + ATP + H(+) = deamido-NAD(+) + diphosphate. It functions in the pathway cofactor biosynthesis; NAD(+) biosynthesis; deamido-NAD(+) from nicotinate D-ribonucleotide: step 1/1. Functionally, catalyzes the reversible adenylation of nicotinate mononucleotide (NaMN) to nicotinic acid adenine dinucleotide (NaAD). The polypeptide is Probable nicotinate-nucleotide adenylyltransferase (Bacillus cereus (strain Q1)).